Here is a 441-residue protein sequence, read N- to C-terminus: N-succinylarginine dihydrolase (441 aa).

Substrate-binding positions include 19–28, N110, and 137–138; these read AGLSFGNEAS and HR. The active site involves E174. R212 contacts substrate. Residue H248 is part of the active site. Positions 250 and 359 each coordinate substrate. C365 acts as the Nucleophile in catalysis.

Belongs to the succinylarginine dihydrolase family. In terms of assembly, homodimer.

It catalyses the reaction N(2)-succinyl-L-arginine + 2 H2O + 2 H(+) = N(2)-succinyl-L-ornithine + 2 NH4(+) + CO2. It functions in the pathway amino-acid degradation; L-arginine degradation via AST pathway; L-glutamate and succinate from L-arginine: step 2/5. In terms of biological role, catalyzes the hydrolysis of N(2)-succinylarginine into N(2)-succinylornithine, ammonia and CO(2). The sequence is that of N-succinylarginine dihydrolase from Erwinia tasmaniensis (strain DSM 17950 / CFBP 7177 / CIP 109463 / NCPPB 4357 / Et1/99).